The sequence spans 294 residues: Golgi to ER traffic protein 2 (294 aa).

The disordered stretch occupies residues 1-104 (MSSELSETEK…QATSPQETID (104 aa)). Over 1–166 (MSSELSETEK…LDYNNYLINN (166 aa)) the chain is Cytoplasmic. The span at 12–21 (KLIRERRQKK) shows a compositional bias: basic residues. Positions 34–65 (ITGQAENSQLDTESPLDSKSSRETTPTVTKVD) are enriched in polar residues. A compositionally biased stretch (basic and acidic residues) spans 85 to 95 (KVEKSQKKKEQ). A helical transmembrane segment spans residues 167 to 187 (LKVWSIIFKWCFFLIPYLFAL). The Lumenal segment spans residues 188–205 (TRSEPISFLPEQFSNPSN). A helical membrane pass occupies residues 206 to 225 (FFMIFLSFEIVATSIYFQKL). The Cytoplasmic portion of the chain corresponds to 226–272 (QNIEKSNKINGFQSNNKIVNLVSLIPEGVLPVPDIKGKVIMALQYWD). Residues 273–293 (VFSMFLTDICFVLVMMGLFKL) traverse the membrane as a helical segment. Position 294 (isoleucine 294) is a topological domain, lumenal.

This sequence belongs to the GET2 family. Component of the Golgi to ER traffic (GET) complex, which is composed of GET1, GET2 and GET3. Within the complex, GET1 and GET2 form a heterotetramer which is stabilized by phosphatidylinositol binding and which binds to the GET3 homodimer.

The protein localises to the endoplasmic reticulum membrane. It localises to the golgi apparatus membrane. Required for the post-translational delivery of tail-anchored (TA) proteins to the endoplasmic reticulum. Together with GET1, acts as a membrane receptor for soluble GET3, which recognizes and selectively binds the transmembrane domain of TA proteins in the cytosol. The GET complex cooperates with the HDEL receptor ERD2 to mediate the ATP-dependent retrieval of resident ER proteins that contain a C-terminal H-D-E-L retention signal from the Golgi to the ER. This is Golgi to ER traffic protein 2 from Vanderwaltozyma polyspora (strain ATCC 22028 / DSM 70294 / BCRC 21397 / CBS 2163 / NBRC 10782 / NRRL Y-8283 / UCD 57-17) (Kluyveromyces polysporus).